The following is a 461-amino-acid chain: Regulatory protein AtoC (461 aa).

Positions 6-120 (RILIVDDEDN…ELNLIVQRAL (115 aa)) constitute a Response regulatory domain. A 4-aspartylphosphate modification is found at aspartate 55. Histidine 73 bears the Phosphohistidine mark. In terms of domain architecture, Sigma-54 factor interaction spans 145–374 (ILTNSPAMMD…LSNVIERAVV (230 aa)). Residues 173–180 (GESGTGKE) and 236–245 (ANEGTLLLDE) each bind ATP. A DNA-binding region (H-T-H motif) is located at residues 433 to 452 (RTRTALMLGISRRALMYKLQ).

Post-translationally, phosphorylated by AtoS. Contains two phosphorylation sites, which are both involved in the transduction of the acetoacetate signal. Asp-55 is probably the primary phosphorylation site, but either both residues can be phosphorylated independently by AtoS or the phosphate group can be transferred between them. In terms of processing, the N-terminus is blocked.

It localises to the cytoplasm. In terms of biological role, member of the two-component regulatory system AtoS/AtoC. In the presence of acetoacetate, AtoS/AtoC stimulates the expression of the atoDAEB operon, leading to short chain fatty acid catabolism and activation of the poly-(R)-3-hydroxybutyrate (cPHB) biosynthetic pathway. Also induces the operon in response to spermidine. Involved in the regulation of motility and chemotaxis, via transcriptional induction of the flagellar regulon. AtoC acts by binding directly to the promoter region of the target genes. In addition to its role as a transcriptional regulator, functions as a post-translational regulator that inhibits polyamine biosynthesis via regulation of ornithine decarboxylase (ODC). This is Regulatory protein AtoC (atoC) from Escherichia coli (strain K12).